We begin with the raw amino-acid sequence, 439 residues long: Perilipin-3 (439 aa).

Over residues 1 to 19 (MFASETEASASSTQVTTEE) the composition is skewed to low complexity. Positions 1 to 26 (MFASETEASASSTQVTTEEPVQQPSV) are disordered. K66 carries the post-translational modification N6-acetyllysine. A Phosphoserine modification is found at S92. Residue K123 forms a Glycyl lysine isopeptide (Lys-Gly) (interchain with G-Cter in SUMO1) linkage. S131 carries the phosphoserine modification. The residue at position 175 (T175) is a Phosphothreonine. Residues S180 and S184 each carry the phosphoserine modification. Position 221 is a phosphothreonine (T221). Residues S222 and S246 each carry the phosphoserine modification. Coiled coils occupy residues 254–282 (RAYEHSLGKLQHTRQRAQEALLQLSQALS) and 358–381 (AHVKEQALQARRQVEDLQATFSGM). At Y256 the chain carries Phosphotyrosine.

It belongs to the perilipin family. Homooligomer. Interacts with M6PR (via the cytoplasmic domain). Interacts with IGF2R (via the cytoplasmic domain). In terms of processing, phosphorylation at Tyr-256 by isoform 1 of CHKA (CHKalpha2) promotes dissociation from lipid droplets: dissociation is followed by recruitment of autophagosome machinery to lipid droplets and subsequent lipid droplet lipolysis.

It is found in the lipid droplet. It localises to the endosome membrane. Its subcellular location is the cytoplasm. In terms of biological role, structural component of lipid droplets, which is required for the formation and maintenance of lipid storage droplets. Required for the transport of mannose 6-phosphate receptors (MPR) from endosomes to the trans-Golgi network. The polypeptide is Perilipin-3 (PLIN3) (Sus scrofa (Pig)).